Consider the following 342-residue polypeptide: Fructose-1,6-bisphosphatase class 1 (342 aa).

Positions 97, 119, 121, and 122 each coordinate Mg(2+). Substrate is bound by residues 122 to 125 (DGSS), asparagine 215, tyrosine 247, and lysine 280. Glutamate 286 provides a ligand contact to Mg(2+).

This sequence belongs to the FBPase class 1 family. In terms of assembly, homotetramer. Mg(2+) is required as a cofactor.

It is found in the cytoplasm. It carries out the reaction beta-D-fructose 1,6-bisphosphate + H2O = beta-D-fructose 6-phosphate + phosphate. The protein operates within carbohydrate biosynthesis; gluconeogenesis. The sequence is that of Fructose-1,6-bisphosphatase class 1 from Leptospira borgpetersenii serovar Hardjo-bovis (strain JB197).